An 86-amino-acid polypeptide reads, in one-letter code: RNA-binding protein Hfq (86 aa).

Residues 9 to 68 enclose the Sm domain; it reads DIFLNVLRRERIQVSIYLFNGIKLQGHIESFDQFVIVLKNTISQMVYKHAVSTIVPSKFV.

The protein belongs to the Hfq family. In terms of assembly, homohexamer.

RNA chaperone that binds small regulatory RNA (sRNAs) and mRNAs to facilitate mRNA translational regulation in response to envelope stress, environmental stress and changes in metabolite concentrations. Also binds with high specificity to tRNAs. In Baumannia cicadellinicola subsp. Homalodisca coagulata, this protein is RNA-binding protein Hfq.